A 613-amino-acid chain; its full sequence is DNA repair and telomere maintenance protein nbs1 (613 aa).

Residues 23-86 enclose the FHA domain; it reads YIVGRNVSDD…FGTKVNEKVV (64 aa). BRCT domains follow at residues 107–186 and 228–302; these read FTIN…YLST and GFSC…KIII. Ser355 carries the post-translational modification Phosphoserine. Disordered regions lie at residues 381-428 and 546-613; these read KEPE…GQGK and TEVF…KFHF. Positions 387-399 are enriched in polar residues; sequence LSNQSNNGSAQNK. The segment covering 400-409 has biased composition (basic and acidic residues); the sequence is KSGDNSEKTK. The segment covering 574 to 592 has biased composition (low complexity); sequence SSDKSGKSSISKKSSNSFK. The FxF/Y motif signature appears at 611 to 613; it reads FHF.

The protein belongs to the Nibrin family. Component of the MRN complex composed of two heterodimers rad32 and rad50 associated with a single nbs1. Interacts with (phosphorylated) ctp1/CtIP. Interacts (via FxF/Y motif) with tel1/atm.

Its subcellular location is the nucleus. It is found in the chromosome. The protein resides in the telomere. Component of the MRN complex, which plays a central role in double-strand break (DSB) repair, DNA recombination, maintenance of telomere integrity and meiosis. The MRN complex is involved in the repair of DNA double-strand breaks (DSBs) via homologous recombination (HR), an error-free mechanism which primarily occurs during S and G2 phases. The complex (1) mediates the end resection of damaged DNA, which generates proper single-stranded DNA, a key initial steps in HR, and is (2) required for the recruitment of other repair factors and efficient activation of tel1/atm upon DNA damage. The MRN complex possesses single-strand endonuclease activity and double-strand-specific 3'-5' exonuclease activity, which are provided by MRE11, to initiate end resection, which is required for single-strand invasion and recombination. Within the MRN complex, nbs1 acts as a protein-protein adapter, which specifically recognizes and binds phosphorylated proteins, promoting their recruitment to DNA damage sites. Recruits rad32 and rad50 components of the MRN complex to DSBs in response to DNA damage. Promotes the recruitment of tel1/atm to the DNA damage sites, activating tel1/atm function. Mediates the recruitment of phosphorylated ctp1/CtIP to DSBs, leading to cooperation between the MRN complex and ctp1/CtIP to initiate end resection. The polypeptide is DNA repair and telomere maintenance protein nbs1 (Schizosaccharomyces pombe (strain 972 / ATCC 24843) (Fission yeast)).